A 221-amino-acid chain; its full sequence is Iron-sulfur cluster repair protein YtfE (221 aa).

This sequence belongs to the RIC family. YtfE subfamily. In terms of assembly, homodimer.

The protein localises to the cytoplasm. In terms of biological role, di-iron-containing protein involved in the repair of iron-sulfur clusters damaged by oxidative and nitrosative stress conditions. This Yersinia pseudotuberculosis serotype O:1b (strain IP 31758) protein is Iron-sulfur cluster repair protein YtfE.